The following is a 72-amino-acid chain: Enterobactin biosynthesis protein YbdZ (72 aa).

This sequence belongs to the MbtH-like family.

Its function is as follows. Involved in the biosynthesis of the siderophore enterobactin (enterochelin), which is a macrocyclic trimeric lactone of N-(2,3-dihydroxybenzoyl)-serine. Plays a role in the catalytic function of EntF. It is required for adenylation of amino acids in non-ribosomal peptide biosynthesis. The protein is Enterobactin biosynthesis protein YbdZ of Escherichia coli (strain K12).